The following is a 434-amino-acid chain: APETALA2-like protein 2 (434 aa).

A disordered region spans residues 1-116 (MLLDLNVESP…KTRRGPRSRS (116 aa)). Positions 12 to 23 (RSGTSSSSVLNS) are enriched in low complexity. The segment covering 25 to 38 (DAGGGGGGGGGGGL) has biased composition (gly residues). A compositionally biased stretch (pro residues) spans 72–87 (LPPPPPAAPSPAPAWQ). The span at 104 to 113 (VAKKTRRGPR) shows a compositional bias: basic residues. The Nuclear localization signal signature appears at 106–115 (KKTRRGPRSR). 2 DNA-binding regions (AP2/ERF) span residues 118-174 (QYRG…INFN) and 210-267 (KFRG…TNFE). The EAR motif lies at 291-295 (LDLRI).

Belongs to the AP2/ERF transcription factor family. AP2 subfamily. May form homodimer. Interacts with TPR2/ASP1. As to expression, highly expressed in developing panicles and in young seedlings. Present at low levels at all developmental stages.

The protein localises to the nucleus. Functionally, probable transcription factor. Involved in spikelet transition. Together with SNB, controls synergistically inflorescence architecture and floral meristem establishment via the regulation of spatio-temporal expression of B- and E-function floral organ identity genes in the lodicules and of spikelet meristem genes. Prevents lemma and palea elongation as well as grain growth. This Oryza sativa subsp. japonica (Rice) protein is APETALA2-like protein 2.